Consider the following 290-residue polypeptide: 4-diphosphocytidyl-2-C-methyl-D-erythritol kinase (290 aa).

Residue Lys11 is part of the active site. An ATP-binding site is contributed by 97-107 (PVAAGIGGGSS). Asp139 is an active-site residue.

This sequence belongs to the GHMP kinase family. IspE subfamily.

The enzyme catalyses 4-CDP-2-C-methyl-D-erythritol + ATP = 4-CDP-2-C-methyl-D-erythritol 2-phosphate + ADP + H(+). It participates in isoprenoid biosynthesis; isopentenyl diphosphate biosynthesis via DXP pathway; isopentenyl diphosphate from 1-deoxy-D-xylulose 5-phosphate: step 3/6. Its function is as follows. Catalyzes the phosphorylation of the position 2 hydroxy group of 4-diphosphocytidyl-2C-methyl-D-erythritol. The polypeptide is 4-diphosphocytidyl-2-C-methyl-D-erythritol kinase (Methylobacterium radiotolerans (strain ATCC 27329 / DSM 1819 / JCM 2831 / NBRC 15690 / NCIMB 10815 / 0-1)).